Consider the following 681-residue polypeptide: DNA-directed RNA polymerase subunit beta' (681 aa).

Cys69, Cys71, Cys87, and Cys90 together coordinate Zn(2+). Mg(2+)-binding residues include Asp489, Asp491, and Asp493.

This sequence belongs to the RNA polymerase beta' chain family. RpoC1 subfamily. In plastids the minimal PEP RNA polymerase catalytic core is composed of four subunits: alpha, beta, beta', and beta''. When a (nuclear-encoded) sigma factor is associated with the core the holoenzyme is formed, which can initiate transcription. Mg(2+) serves as cofactor. Zn(2+) is required as a cofactor.

It is found in the plastid. The protein localises to the chloroplast. It catalyses the reaction RNA(n) + a ribonucleoside 5'-triphosphate = RNA(n+1) + diphosphate. In terms of biological role, DNA-dependent RNA polymerase catalyzes the transcription of DNA into RNA using the four ribonucleoside triphosphates as substrates. The polypeptide is DNA-directed RNA polymerase subunit beta' (Atropa belladonna (Belladonna)).